Reading from the N-terminus, the 1781-residue chain is Chitin synthase 7 (1781 aa).

6 N-linked (GlcNAc...) asparagine glycosylation sites follow: Asn133, Asn534, Asn629, Asn644, Asn655, and Asn660. 2 consecutive transmembrane segments (helical) span residues 741–761 and 777–797; these read AWVA…LKFV and LVLF…IIGF. N-linked (GlcNAc...) asparagine glycans are attached at residues Asn889 and Asn1011. Residues 1048-1068 form a helical membrane-spanning segment; it reads LLLAFAIIICIVTAVKFLAAL. N-linked (GlcNAc...) asparagine glycosylation is present at Asn1413. 3 helical membrane-spanning segments follow: residues 1444-1464, 1471-1491, and 1499-1519; these read LTGT…IYVL, IPYI…LIFI, and IGWM…LPLY. Asn1526 carries an N-linked (GlcNAc...) asparagine glycan. The tract at residues 1677-1712 is disordered; sequence QANLSPAAGGGHSRSGTALGFSSGSRSPMPDAMRSQ. The segment covering 1690-1702 has biased composition (polar residues); the sequence is RSGTALGFSSGSR. The region spanning 1723–1779 is the DEK-C domain; sequence GPTDMAIVESIRSVLCEVDLDTVTKKQVRALVEQRLQTELVGERRTFMDRQIDHELE.

This sequence belongs to the chitin synthase family. Class V subfamily.

It is found in the cell membrane. It carries out the reaction [(1-&gt;4)-N-acetyl-beta-D-glucosaminyl](n) + UDP-N-acetyl-alpha-D-glucosamine = [(1-&gt;4)-N-acetyl-beta-D-glucosaminyl](n+1) + UDP + H(+). Polymerizes chitin, a structural polymer of the cell wall and septum, by transferring the sugar moiety of UDP-GlcNAc to the non-reducing end of the growing chitin polymer. Shows additive effects in septum formation with CHS1, CHS2, CHS3A, CHS4, CHS5 and CHS6. Indispensable for perithecia formation and regulates conidiation. Plays an important role in the response to cell wall stress. Also required for hyphal growth and pathogenicity. In Gibberella zeae (strain ATCC MYA-4620 / CBS 123657 / FGSC 9075 / NRRL 31084 / PH-1) (Wheat head blight fungus), this protein is Chitin synthase 7.